Consider the following 100-residue polypeptide: Urease subunit gamma (100 aa).

It belongs to the urease gamma subunit family. Heterotrimer of UreA (gamma), UreB (beta) and UreC (alpha) subunits. Three heterotrimers associate to form the active enzyme.

It is found in the cytoplasm. The catalysed reaction is urea + 2 H2O + H(+) = hydrogencarbonate + 2 NH4(+). The protein operates within nitrogen metabolism; urea degradation; CO(2) and NH(3) from urea (urease route): step 1/1. The sequence is that of Urease subunit gamma from Rhodopseudomonas palustris (strain BisB18).